The following is a 460-amino-acid chain: UDP-N-acetylmuramate--L-alanine ligase (460 aa).

Residue 118 to 124 (GAHGKTT) coordinates ATP.

Belongs to the MurCDEF family.

The protein localises to the cytoplasm. It carries out the reaction UDP-N-acetyl-alpha-D-muramate + L-alanine + ATP = UDP-N-acetyl-alpha-D-muramoyl-L-alanine + ADP + phosphate + H(+). The protein operates within cell wall biogenesis; peptidoglycan biosynthesis. Its function is as follows. Cell wall formation. The chain is UDP-N-acetylmuramate--L-alanine ligase from Clostridium botulinum (strain Alaska E43 / Type E3).